The chain runs to 95 residues: Large ribosomal subunit protein uL23 (95 aa).

This sequence belongs to the universal ribosomal protein uL23 family. As to quaternary structure, part of the 50S ribosomal subunit. Contacts protein L29, and trigger factor when it is bound to the ribosome.

One of the early assembly proteins it binds 23S rRNA. One of the proteins that surrounds the polypeptide exit tunnel on the outside of the ribosome. Forms the main docking site for trigger factor binding to the ribosome. The protein is Large ribosomal subunit protein uL23 of Bacillus pumilus (strain SAFR-032).